Consider the following 358-residue polypeptide: tRNA-specific 2-thiouridylase MnmA (358 aa).

ATP contacts are provided by residues 8 to 15 and leucine 34; that span reads GLSGGVDS. Cysteine 95 acts as the Nucleophile in catalysis. A disulfide bridge links cysteine 95 with cysteine 194. Residue glycine 120 coordinates ATP. Residues 144–146 form an interaction with tRNA region; the sequence is KDQ. Residue cysteine 194 is the Cysteine persulfide intermediate of the active site. Residues 299-300 form an interaction with tRNA region; that stretch reads RY.

It belongs to the MnmA/TRMU family.

It is found in the cytoplasm. It carries out the reaction S-sulfanyl-L-cysteinyl-[protein] + uridine(34) in tRNA + AH2 + ATP = 2-thiouridine(34) in tRNA + L-cysteinyl-[protein] + A + AMP + diphosphate + H(+). In terms of biological role, catalyzes the 2-thiolation of uridine at the wobble position (U34) of tRNA, leading to the formation of s(2)U34. The protein is tRNA-specific 2-thiouridylase MnmA of Synechocystis sp. (strain ATCC 27184 / PCC 6803 / Kazusa).